The following is a 634-amino-acid chain: MAVSAPPVISATSSSAGVPGGLFRAEPLYSSPGEPPRLTPNMINSFMANNHNGSVLGGGIGGGSGGSSNTNTNECRMVDMHGVKVASFLMDGQELICLPQVFDLFLKHLVGGLHTVYTKLKRLDISPVVCTVEQVRILRGLGAIQPGVNRCKLITRKDFETLFTDCTNARRKRQMTRKQAVNSSRPGRPPKRSLGVLQDNARLLPHAVPGLLSPGLITPTGITAAAMAEAMKLQKMKLMAMNTLQGNGSQNGTESEPDDLNSTTGGSESSWDKDKIQSPLAASGPQHGIAHAALAGQPGLGGAPTLNPLQQNHLLSNRLDLPFMMMPHPLLPVSLPPASVAMAMNQMNHLNTIANMAAAAQIHSPLSRAGASVIKERIPESPSPAPSLEESHRPGSQTSSHPSSSVSSSPSQMDHHSERMVMMPNNREELIVDQDNGQSIKKFQRDNKEEVPAQIPVMKSPLDKIQLAPGQALHPGFPGPFIFADSLSSVETLLTNIQGLLKVALDNARIQEKQIQQEKKELRIELFREREIRENLERQLAVELQSRSTMQKRLKKEKKAKRKLQEALEFESKRREQVEQALKQATSGDSGLRMLKDSGIPDIEIENSGTPHDSAAMQGGNYYCLAMAQQLCSA.

The DACHbox-N stretch occupies residues 76 to 162 (RMVDMHGVKV…LITRKDFETL (87 aa)). 3 disordered regions span residues 171–194 (RKRQ…KRSL), 244–286 (LQGN…SGPQ), and 378–416 (IPES…MDHH). Polar residues predominate over residues 244-269 (LQGNGSQNGTESEPDDLNSTTGGSES). Residues 396-412 (SQTSSHPSSSVSSSPSQ) show a composition bias toward low complexity. Positions 488–568 (SSVETLLTNI…KAKRKLQEAL (81 aa)) are DACHbox-C. The stretch at 494-588 (LTNIQGLLKV…EQALKQATSG (95 aa)) forms a coiled coil.

Belongs to the DACH/dachshund family. In terms of assembly, interacts with SIX6. Interacts with EYA2. Expressed in embryo, and at lower levels in the newborn.

It localises to the nucleus. In terms of biological role, transcription factor that is involved in regulation of organogenesis. Seems to be a regulator for SIX1 and SIX6. Seems to act as a corepressor of SIX6 in regulating proliferation by directly repressing cyclin-dependent kinase inhibitors, including the p27Kip1 promoter. Is recruited with SIX6 to the p27Kip1 promoter in embryonal retina. SIX6 corepression also seems to involve NCOR1, TBL1, HDAC1 and HDAC3. May be involved together with PAX3, SIX1, and EYA2 in regulation of myogenesis. In the developing somite, expression of DACH2 and PAX3 is regulated by the overlying ectoderm, and DACH2 and PAX3 positively regulate each other's expression. Probably binds to DNA via its DACHbox-N domain. In Mus musculus (Mouse), this protein is Dachshund homolog 2 (Dach2).